We begin with the raw amino-acid sequence, 697 residues long: Polyribonucleotide nucleotidyltransferase (697 aa).

Residues aspartate 486 and aspartate 492 each coordinate Mg(2+). The 60-residue stretch at 553–612 (PRIHTIKIHPDKIKDVIGKCGSVIRALTEETKTIIDIEDDGTVTVAATDSIKAQQAICRI) folds into the KH domain. The S1 motif domain occupies 622-690 (GSIYHGKVTR…RQGRIRLSMK (69 aa)).

It belongs to the polyribonucleotide nucleotidyltransferase family. In terms of assembly, component of the RNA degradosome, which is a multiprotein complex involved in RNA processing and mRNA degradation. The cofactor is Mg(2+).

The protein resides in the cytoplasm. It carries out the reaction RNA(n+1) + phosphate = RNA(n) + a ribonucleoside 5'-diphosphate. Involved in mRNA degradation. Catalyzes the phosphorolysis of single-stranded polyribonucleotides processively in the 3'- to 5'-direction. This chain is Polyribonucleotide nucleotidyltransferase, found in Baumannia cicadellinicola subsp. Homalodisca coagulata.